Reading from the N-terminus, the 874-residue chain is MKTTAEIRQSFLDFFHSKGHQVVESSSLVPENDPTLLFTNAGMNQFKDVFLGMDKRPYSRATTAQRCVRAGGKHNDLENVGYTARHHTFFEMMGNFSFGDYFKYDAINFAWEFLTSPKWLALPKEKLYVTVYETDDEAYDIWNKEVGVPQEHIIRIGDNKGAPYASDNFWAMGDTGPCGPCTEIFYDHGDHIWGGLPGTPEEDGDRYIEIWNIVFMQFNRLADGTMEKLPKPSVDTGMGLERMTAVLQHVNSNYEIDIFQTLIKKVAEIVGTTDLGNKSLRVIADHIRSCAYLIADGVIPSNEGRGYVLRRIIRRAVRHGHLLGAKETFFYKLVPTLIEVMAEAGKQVKEKQANVEKLLRLEEEQFARTLERGLILLDAELANVKNGVLSGEVAFKLYDTYGFPLDLTADVCRERNIAVDENGFDKEMEAQRLRAQSASNFGMDYTSIIRVDGETKFEGYTNVESLAKVTALFRDGKAVESVSAGQSAVVILENTPFYAEMGGQIGDSGMLTANGLHFDVKDTQKYGQVFGHIGELTQGTLSVGQIVNAQVDAQRRQYTKLNHSATHLLHAALRQVLGEHVAQKGSLVSDVGLRFDFVQPEAVTKEQIMEIERLVNFHIRANHPVLTEEMGVAEAKSKGAIALFGEKYGETVRVVTMSPFSIELCGGLHVERTGEIGLLKIISEGAVAAGIRRVEAVTGEEAINWLFNQQTILAQSADLLKSDIPSLPEKIIQLQDKVKKTEKELQQLKEKAAMQAGSDLAKSAVKINGVSVVTHQLDGADAKVLRVMVDDLKNQLGSAVIALGSASGGKVNLIAGVTADLTAKVKAGELVNVMAQQVGGKGGGRPDMAMAGGSQPENLSAALIVASDWLKTMI.

Zn(2+) contacts are provided by H563, H567, C665, and H669.

It belongs to the class-II aminoacyl-tRNA synthetase family. Zn(2+) is required as a cofactor.

It is found in the cytoplasm. The catalysed reaction is tRNA(Ala) + L-alanine + ATP = L-alanyl-tRNA(Ala) + AMP + diphosphate. In terms of biological role, catalyzes the attachment of alanine to tRNA(Ala) in a two-step reaction: alanine is first activated by ATP to form Ala-AMP and then transferred to the acceptor end of tRNA(Ala). Also edits incorrectly charged Ser-tRNA(Ala) and Gly-tRNA(Ala) via its editing domain. This is Alanine--tRNA ligase from Actinobacillus succinogenes (strain ATCC 55618 / DSM 22257 / CCUG 43843 / 130Z).